A 374-amino-acid polypeptide reads, in one-letter code: Pectate lyase 2 (374 aa).

Positions 1–22 (MKYLLPTAATGLLLLAAQPAVA) are cleaved as a signal peptide. Cys93 and Cys176 are oxidised to a cystine. Ca(2+)-binding residues include Asp150, Asp152, Glu187, and Asp191. Arg239 is a catalytic residue. Cys350 and Cys373 form a disulfide bridge.

It belongs to the polysaccharide lyase 1 family. PLADES subfamily. Ca(2+) serves as cofactor.

Its subcellular location is the secreted. It catalyses the reaction Eliminative cleavage of (1-&gt;4)-alpha-D-galacturonan to give oligosaccharides with 4-deoxy-alpha-D-galact-4-enuronosyl groups at their non-reducing ends.. Its pathway is glycan metabolism; pectin degradation; 2-dehydro-3-deoxy-D-gluconate from pectin: step 2/5. In terms of biological role, involved in maceration and soft-rotting of plant tissue. This is Pectate lyase 2 (pel2) from Pectobacterium atrosepticum (strain SCRI 1043 / ATCC BAA-672) (Erwinia carotovora subsp. atroseptica).